We begin with the raw amino-acid sequence, 518 residues long: Pre-glycoprotein polyprotein GP complex (518 aa).

The N-myristoyl glycine; by host moiety is linked to residue G2. The Extracellular portion of the chain corresponds to 2 to 17 (GQVIGFFQSLPNIINE). Residues 18 to 33 (ALNIALICVALIAILK) form a helical membrane-spanning segment. The Cytoplasmic segment spans residues 34-58 (GIVNIWKSGLIQLFIFLILAGRSCS). C57 is a binding site for Zn(2+). Residues 59–456 (HTFQIGRNHE…QGSTPLSLVD (398 aa)) are Extracellular-facing. Intrachain disulfides connect C87–C258, C303–C316, C325–C334, and C388–C409. N-linked (GlcNAc...) asparagine; by host glycosylation is found at N90, N112, N127, N180, and N251. N-linked (GlcNAc...) asparagine; by host glycans are attached at residues N389, N397, N414, and N419. Residues 457-477 (LCFWSTLFYVTTLFAHLVGFP) form a helical membrane-spanning segment. Residues 478-518 (THRHILDGPCPKPHRLTKKGICSCGHFGIPGKPVRWVKRSR) are Cytoplasmic-facing. Zn(2+)-binding residues include H479, H481, C487, H491, C499, and C501.

This sequence belongs to the arenaviridae GPC protein family. Interacts with glycoprotein G2. Part of the GP complex (GP-C) together with glycoprotein G1 and glycoprotein G2. The GP-complex interacts with protein Z, which interacts with ribonucleocapsid; these interactions may induce virion budding. In terms of assembly, homotrimer; disulfide-linked. In pre-fusion state, G1 homotrimers bind G2 homotrimers via ionic interactions. Part of the GP complex (GP-C) together with glycoprotein G2 and the stable signal peptide. The GP-complex interacts with protein Z, which interacts with ribonucleocapsid; these interactions may induce virion budding. As to quaternary structure, homotrimer. Interacts with the stable signal peptide. In pre-fusion state, G2 homotrimers bind G1 homotrimers via ionic interactions. Part of the GP complex (GP-C) together with glycoprotein G1 and the stable signal peptide. Acidification in the endosome triggers rearrangements, which ultimately leads to a 6 helix bundle formed by the two heptad repeat domains (HR1 and HR2) in post-fusion state. The GP-complex interacts with protein Z, which interacts with ribonucleocapsid; these interactions may induce virion budding. Specific enzymatic cleavages in vivo yield mature proteins. GP-C polyprotein is cleaved in the endoplasmic reticulum by the host protease MBTPS1. Only cleaved glycoprotein is incorporated into virions. Post-translationally, the SSP remains stably associated with the GP complex following cleavage by signal peptidase and plays crucial roles in the trafficking of GP through the secretory pathway. In terms of processing, myristoylation is necessary for GP2-mediated fusion activity.

The protein localises to the virion membrane. It is found in the host endoplasmic reticulum membrane. Its subcellular location is the host Golgi apparatus membrane. The protein resides in the host cell membrane. In terms of biological role, functions as a cleaved signal peptide that is retained as the third component of the GP complex (GP-C). Helps to stabilize the spike complex in its native conformation. The SSP is required for efficient glycoprotein expression, post-translational maturation cleavage of G1 and G2, glycoprotein transport to the cell surface plasma membrane, formation of infectious virus particles, and acid pH-dependent glycoprotein-mediated cell fusion. Functionally, forms the virion spikes together with glycoprotein G2. The glycoprotein spike trimers are connected to the underlying matrix. Mediates virus attachment to host receptor alpha-dystroglycan DAG1. This attachment induces virion internalization predominantly through clathrin- and caveolin-independent endocytosis. Forms the virion spikes together with glycoprotein G1. The glycoprotein spike trimers are connected to the underlying matrix. Class I viral fusion protein that directs fusion of viral and host endosomal membranes, leading to delivery of the nucleocapsid into the cytoplasm. Membrane fusion is mediated by irreversible conformational changes induced by acidification. This chain is Pre-glycoprotein polyprotein GP complex, found in Bolomys (OLVV).